A 165-amino-acid polypeptide reads, in one-letter code: Chorismate pyruvate-lyase (165 aa).

Residues methionine 35, arginine 77, leucine 115, and glutamate 156 each coordinate substrate.

Belongs to the UbiC family. In terms of assembly, monomer.

Its subcellular location is the cytoplasm. The catalysed reaction is chorismate = 4-hydroxybenzoate + pyruvate. Its pathway is cofactor biosynthesis; ubiquinone biosynthesis. In terms of biological role, removes the pyruvyl group from chorismate, with concomitant aromatization of the ring, to provide 4-hydroxybenzoate (4HB) for the ubiquinone pathway. The polypeptide is Chorismate pyruvate-lyase (Salmonella enteritidis PT4 (strain P125109)).